We begin with the raw amino-acid sequence, 439 residues long: Enolase (439 aa).

Q163 provides a ligand contact to (2R)-2-phosphoglycerate. Catalysis depends on E205, which acts as the Proton donor. D242, E287, and D314 together coordinate Mg(2+). K339, R368, S369, and K390 together coordinate (2R)-2-phosphoglycerate. The Proton acceptor role is filled by K339.

The protein belongs to the enolase family. Mg(2+) serves as cofactor.

It localises to the cytoplasm. The protein localises to the secreted. It is found in the cell surface. It catalyses the reaction (2R)-2-phosphoglycerate = phosphoenolpyruvate + H2O. It functions in the pathway carbohydrate degradation; glycolysis; pyruvate from D-glyceraldehyde 3-phosphate: step 4/5. In terms of biological role, catalyzes the reversible conversion of 2-phosphoglycerate (2-PG) into phosphoenolpyruvate (PEP). It is essential for the degradation of carbohydrates via glycolysis. The polypeptide is Enolase (Levilactobacillus brevis (strain ATCC 367 / BCRC 12310 / CIP 105137 / JCM 1170 / LMG 11437 / NCIMB 947 / NCTC 947) (Lactobacillus brevis)).